The primary structure comprises 642 residues: Threonine--tRNA ligase (642 aa).

The TGS domain occupies Met1–Asp61. The segment at Asp243 to Pro534 is catalytic. Positions 334, 385, and 511 each coordinate Zn(2+).

Belongs to the class-II aminoacyl-tRNA synthetase family. As to quaternary structure, homodimer. Zn(2+) is required as a cofactor.

The protein localises to the cytoplasm. It carries out the reaction tRNA(Thr) + L-threonine + ATP = L-threonyl-tRNA(Thr) + AMP + diphosphate + H(+). Its function is as follows. Catalyzes the attachment of threonine to tRNA(Thr) in a two-step reaction: L-threonine is first activated by ATP to form Thr-AMP and then transferred to the acceptor end of tRNA(Thr). Also edits incorrectly charged L-seryl-tRNA(Thr). In Buchnera aphidicola subsp. Acyrthosiphon pisum (strain APS) (Acyrthosiphon pisum symbiotic bacterium), this protein is Threonine--tRNA ligase.